Reading from the N-terminus, the 284-residue chain is tRNA pseudouridine synthase B (284 aa).

Aspartate 40 serves as the catalytic Nucleophile.

Belongs to the pseudouridine synthase TruB family. Type 1 subfamily.

The catalysed reaction is uridine(55) in tRNA = pseudouridine(55) in tRNA. Functionally, responsible for synthesis of pseudouridine from uracil-55 in the psi GC loop of transfer RNAs. The sequence is that of tRNA pseudouridine synthase B from Helicobacter hepaticus (strain ATCC 51449 / 3B1).